A 1059-amino-acid polypeptide reads, in one-letter code: Dihydropyrimidine dehydrogenase [NADP(+)] (1059 aa).

In terms of domain architecture, 4Fe-4S ferredoxin-type 1 spans 84-118 (ERGALKEAMRCLKCADAPCQKSCPTQLDVKSFITS). Positions 94, 97, 102, 106, 145, 151, 155, and 171 each coordinate [4Fe-4S] cluster. FAD contacts are provided by residues 207-211 (GCGPA), 231-239 (EKRAYIGGL), Arg248, and Leu274. Residues 354-357 (AGDT), 378-379 (RK), Arg385, 451-453 (AFG), and 495-501 (DVAGVAE) contribute to the NADP(+) site. Residue 494–503 (GDVAGVAETT) coordinates FAD. FMN-binding positions include Ser564 and 588-589 (KT). Substrate-binding positions include Asn623 and 682–684 (NLS). Cys685 functions as the Proton acceptor in the catalytic mechanism. Residue Lys723 participates in FMN binding. 750-751 (NT) provides a ligand contact to substrate. FMN contacts are provided by residues Gly781, 807 to 809 (TGG), and 830 to 831 (CS). 4Fe-4S ferredoxin-type domains lie at 955-987 (KVAIIDDDMCINCGKCYMTCNDSGYQAITFDPV) and 989-1019 (HQPHVTEDDCTGCTLCYSVCPIPECIEMVPR). Residues Cys964, Cys967, Cys970, Cys974, Cys998, Cys1001, Cys1004, and Cys1008 each contribute to the [4Fe-4S] cluster site.

The protein belongs to the dihydropyrimidine dehydrogenase family. [4Fe-4S] cluster is required as a cofactor. It depends on FAD as a cofactor. Requires FMN as cofactor.

The catalysed reaction is 5,6-dihydrouracil + NADP(+) = uracil + NADPH + H(+). Its pathway is amino-acid biosynthesis; beta-alanine biosynthesis. Involved in pyrimidine base degradation. Catalyzes the reduction of uracil and thymine. Involved in the degradation of the chemotherapeutic drug 5-fluorouracil. The protein is Dihydropyrimidine dehydrogenase [NADP(+)] (dpyd-1) of Caenorhabditis elegans.